Reading from the N-terminus, the 252-residue chain is Triosephosphate isomerase (252 aa).

A substrate-binding site is contributed by 10 to 12; that stretch reads NWK. Residue histidine 96 is the Electrophile of the active site. Catalysis depends on glutamate 168, which acts as the Proton acceptor. Residues glycine 174, serine 213, and 234–235 contribute to the substrate site; that span reads GG.

This sequence belongs to the triosephosphate isomerase family. As to quaternary structure, homodimer.

It is found in the cytoplasm. The catalysed reaction is D-glyceraldehyde 3-phosphate = dihydroxyacetone phosphate. Its pathway is carbohydrate biosynthesis; gluconeogenesis. It participates in carbohydrate degradation; glycolysis; D-glyceraldehyde 3-phosphate from glycerone phosphate: step 1/1. In terms of biological role, involved in the gluconeogenesis. Catalyzes stereospecifically the conversion of dihydroxyacetone phosphate (DHAP) to D-glyceraldehyde-3-phosphate (G3P). The protein is Triosephosphate isomerase of Idiomarina loihiensis (strain ATCC BAA-735 / DSM 15497 / L2-TR).